The sequence spans 361 residues: Phosphoserine aminotransferase (361 aa).

R42 contacts L-glutamate. Pyridoxal 5'-phosphate is bound by residues 76-77 (GR), W102, T154, D173, and Q196. K197 carries the N6-(pyridoxal phosphate)lysine modification. 238-239 (NT) is a pyridoxal 5'-phosphate binding site.

Belongs to the class-V pyridoxal-phosphate-dependent aminotransferase family. SerC subfamily. In terms of assembly, homodimer. The cofactor is pyridoxal 5'-phosphate.

Its subcellular location is the cytoplasm. The catalysed reaction is O-phospho-L-serine + 2-oxoglutarate = 3-phosphooxypyruvate + L-glutamate. It carries out the reaction 4-(phosphooxy)-L-threonine + 2-oxoglutarate = (R)-3-hydroxy-2-oxo-4-phosphooxybutanoate + L-glutamate. It participates in amino-acid biosynthesis; L-serine biosynthesis; L-serine from 3-phospho-D-glycerate: step 2/3. The protein operates within cofactor biosynthesis; pyridoxine 5'-phosphate biosynthesis; pyridoxine 5'-phosphate from D-erythrose 4-phosphate: step 3/5. In terms of biological role, catalyzes the reversible conversion of 3-phosphohydroxypyruvate to phosphoserine and of 3-hydroxy-2-oxo-4-phosphonooxybutanoate to phosphohydroxythreonine. This Idiomarina loihiensis (strain ATCC BAA-735 / DSM 15497 / L2-TR) protein is Phosphoserine aminotransferase.